A 366-amino-acid chain; its full sequence is Anhydro-N-acetylmuramic acid kinase (366 aa).

ATP is bound at residue 10-17; it reads GTSMDGID.

Belongs to the anhydro-N-acetylmuramic acid kinase family.

The catalysed reaction is 1,6-anhydro-N-acetyl-beta-muramate + ATP + H2O = N-acetyl-D-muramate 6-phosphate + ADP + H(+). It participates in amino-sugar metabolism; 1,6-anhydro-N-acetylmuramate degradation. The protein operates within cell wall biogenesis; peptidoglycan recycling. Catalyzes the specific phosphorylation of 1,6-anhydro-N-acetylmuramic acid (anhMurNAc) with the simultaneous cleavage of the 1,6-anhydro ring, generating MurNAc-6-P. Is required for the utilization of anhMurNAc either imported from the medium or derived from its own cell wall murein, and thus plays a role in cell wall recycling. The chain is Anhydro-N-acetylmuramic acid kinase from Legionella pneumophila (strain Paris).